The chain runs to 449 residues: UDP-N-acetylmuramate--L-alanine ligase (449 aa).

121-127 (GAHGKSS) provides a ligand contact to ATP.

Belongs to the MurCDEF family.

The protein localises to the cytoplasm. The enzyme catalyses UDP-N-acetyl-alpha-D-muramate + L-alanine + ATP = UDP-N-acetyl-alpha-D-muramoyl-L-alanine + ADP + phosphate + H(+). It functions in the pathway cell wall biogenesis; peptidoglycan biosynthesis. In terms of biological role, cell wall formation. The polypeptide is UDP-N-acetylmuramate--L-alanine ligase (Helicobacter pylori (strain J99 / ATCC 700824) (Campylobacter pylori J99)).